Here is a 390-residue protein sequence, read N- to C-terminus: Protein-glutamate methylesterase/protein-glutamine glutaminase (390 aa).

Residues 4-121 enclose the Response regulatory domain; sequence RALVVDDSGF…SGDMEQVKRQ (118 aa). 4-aspartylphosphate is present on Asp-55. Residues 130-198 form a disordered region; it reads GGGRGAPAGR…AAPAPERGQR (69 aa). 2 stretches are compositionally biased toward low complexity: residues 136-148 and 179-193; these read PAGR…APVD and EAPV…APAP. Residues 201–390 form the CheB-type methylesterase domain; it reads PGALRLVVIG…QVGEELAKLR (190 aa). Residues Ser-212, His-239, and Asp-335 contribute to the active site.

This sequence belongs to the CheB family. Phosphorylated by CheA. Phosphorylation of the N-terminal regulatory domain activates the methylesterase activity.

Its subcellular location is the cytoplasm. It catalyses the reaction [protein]-L-glutamate 5-O-methyl ester + H2O = L-glutamyl-[protein] + methanol + H(+). The catalysed reaction is L-glutaminyl-[protein] + H2O = L-glutamyl-[protein] + NH4(+). Its function is as follows. Involved in chemotaxis. Part of a chemotaxis signal transduction system that modulates chemotaxis in response to various stimuli. Catalyzes the demethylation of specific methylglutamate residues introduced into the chemoreceptors (methyl-accepting chemotaxis proteins or MCP) by CheR. Also mediates the irreversible deamidation of specific glutamine residues to glutamic acid. The sequence is that of Protein-glutamate methylesterase/protein-glutamine glutaminase from Alkalilimnicola ehrlichii (strain ATCC BAA-1101 / DSM 17681 / MLHE-1).